The primary structure comprises 115 residues: NAD(P)H-quinone oxidoreductase subunit M (115 aa).

Belongs to the complex I NdhM subunit family. As to quaternary structure, NDH-1 can be composed of about 15 different subunits; different subcomplexes with different compositions have been identified which probably have different functions.

Its subcellular location is the cellular thylakoid membrane. It catalyses the reaction a plastoquinone + NADH + (n+1) H(+)(in) = a plastoquinol + NAD(+) + n H(+)(out). It carries out the reaction a plastoquinone + NADPH + (n+1) H(+)(in) = a plastoquinol + NADP(+) + n H(+)(out). Its function is as follows. NDH-1 shuttles electrons from an unknown electron donor, via FMN and iron-sulfur (Fe-S) centers, to quinones in the respiratory and/or the photosynthetic chain. The immediate electron acceptor for the enzyme in this species is believed to be plastoquinone. Couples the redox reaction to proton translocation, and thus conserves the redox energy in a proton gradient. Cyanobacterial NDH-1 also plays a role in inorganic carbon-concentration. The protein is NAD(P)H-quinone oxidoreductase subunit M of Prochlorococcus marinus (strain NATL1A).